The chain runs to 596 residues: Proline--tRNA ligase (596 aa).

Belongs to the class-II aminoacyl-tRNA synthetase family. ProS type 1 subfamily. Homodimer.

Its subcellular location is the cytoplasm. The enzyme catalyses tRNA(Pro) + L-proline + ATP = L-prolyl-tRNA(Pro) + AMP + diphosphate. Catalyzes the attachment of proline to tRNA(Pro) in a two-step reaction: proline is first activated by ATP to form Pro-AMP and then transferred to the acceptor end of tRNA(Pro). As ProRS can inadvertently accommodate and process non-cognate amino acids such as alanine and cysteine, to avoid such errors it has two additional distinct editing activities against alanine. One activity is designated as 'pretransfer' editing and involves the tRNA(Pro)-independent hydrolysis of activated Ala-AMP. The other activity is designated 'posttransfer' editing and involves deacylation of mischarged Ala-tRNA(Pro). The misacylated Cys-tRNA(Pro) is not edited by ProRS. This Prochlorococcus marinus (strain NATL1A) protein is Proline--tRNA ligase.